Consider the following 165-residue polypeptide: Cathelicidin-7 (165 aa).

The N-terminal stretch at 1–29 (METQRASFSLGRSSLWLLLLGLVVPSASA) is a signal peptide. A propeptide spanning residues 30–130 (QDLSYREAVL…FDITCNNIQS (101 aa)) is cleaved from the precursor. 2 disulfide bridges follow: C86–C97 and C108–C125. An Arginine amide modification is found at R164.

The protein belongs to the cathelicidin family. Expressed in bone marrow myeloid cells, spleen and testis.

Its subcellular location is the secreted. Functionally, exerts a potent antimicrobial activity. In Bos taurus (Bovine), this protein is Cathelicidin-7 (CATHL7).